The chain runs to 183 residues: ATP-dependent protease subunit HslV (183 aa).

Threonine 13 is an active-site residue. The Na(+) site is built by glycine 168, cysteine 171, and threonine 174.

It belongs to the peptidase T1B family. HslV subfamily. A double ring-shaped homohexamer of HslV is capped on each side by a ring-shaped HslU homohexamer. The assembly of the HslU/HslV complex is dependent on binding of ATP.

The protein resides in the cytoplasm. The enzyme catalyses ATP-dependent cleavage of peptide bonds with broad specificity.. With respect to regulation, allosterically activated by HslU binding. In terms of biological role, protease subunit of a proteasome-like degradation complex believed to be a general protein degrading machinery. The polypeptide is ATP-dependent protease subunit HslV (Xanthomonas axonopodis pv. citri (strain 306)).